The primary structure comprises 339 residues: Foldase protein PrsA (339 aa).

The first 26 residues, 1–26, serve as a signal peptide directing secretion; that stretch reads MKHLKNNTKKFTALLFALLFSMSIAG. Residue Cys27 is the site of N-palmitoyl cysteine attachment. A lipid anchor (S-diacylglycerol cysteine) is attached at Cys27. In terms of domain architecture, PpiC spans 197 to 287; the sequence is KPTFHAQHVL…FGYHVIKLID (91 aa).

The protein belongs to the PrsA family.

The protein localises to the cell membrane. The enzyme catalyses [protein]-peptidylproline (omega=180) = [protein]-peptidylproline (omega=0). Plays a major role in protein secretion by helping the post-translocational extracellular folding of several secreted proteins. The chain is Foldase protein PrsA from Clostridium tetani (strain Massachusetts / E88).